The chain runs to 329 residues: Carbonic anhydrase (329 aa).

The segment at 1–108 (MSTASAFAIN…AAARIDQITA (108 aa)) is chloroplast transit peptide-like.

The protein belongs to the beta-class carbonic anhydrase family. Homohexamer.

It is found in the cytoplasm. It catalyses the reaction hydrogencarbonate + H(+) = CO2 + H2O. Reversible hydration of carbon dioxide. The chain is Carbonic anhydrase from Flaveria pringlei.